The primary structure comprises 427 residues: Methylenetetrahydrofolate--tRNA-(uracil-5-)-methyltransferase TrmFO (427 aa).

FAD is bound at residue 8 to 13 (GAGISG).

This sequence belongs to the MnmG family. TrmFO subfamily. FAD serves as cofactor.

It localises to the cytoplasm. It carries out the reaction uridine(54) in tRNA + (6R)-5,10-methylene-5,6,7,8-tetrahydrofolate + NADH + H(+) = 5-methyluridine(54) in tRNA + (6S)-5,6,7,8-tetrahydrofolate + NAD(+). It catalyses the reaction uridine(54) in tRNA + (6R)-5,10-methylene-5,6,7,8-tetrahydrofolate + NADPH + H(+) = 5-methyluridine(54) in tRNA + (6S)-5,6,7,8-tetrahydrofolate + NADP(+). Functionally, catalyzes the folate-dependent formation of 5-methyl-uridine at position 54 (M-5-U54) in all tRNAs. This is Methylenetetrahydrofolate--tRNA-(uracil-5-)-methyltransferase TrmFO from Mycoplasmopsis agalactiae (strain NCTC 10123 / CIP 59.7 / PG2) (Mycoplasma agalactiae).